We begin with the raw amino-acid sequence, 193 residues long: dCTP deaminase (193 aa).

DCTP is bound by residues 110-115, Asp128, 136-138, Tyr171, Lys178, and Gln182; these read RSSLAR and VLE. The Proton donor/acceptor role is filled by Glu138. The segment at 169–193 is disordered; the sequence is RPYNRRQDAKYRDQQGAVASRIDKD.

The protein belongs to the dCTP deaminase family. In terms of assembly, homotrimer.

The catalysed reaction is dCTP + H2O + H(+) = dUTP + NH4(+). Its pathway is pyrimidine metabolism; dUMP biosynthesis; dUMP from dCTP (dUTP route): step 1/2. In terms of biological role, catalyzes the deamination of dCTP to dUTP. The polypeptide is dCTP deaminase (Salmonella arizonae (strain ATCC BAA-731 / CDC346-86 / RSK2980)).